We begin with the raw amino-acid sequence, 156 residues long: Snaclec subunit B (156 aa).

An N-terminal signal peptide occupies residues 1–23 (MGRSIFVNLGLLVVAFSLRGSEA). Cystine bridges form between Cys-25–Cys-36, Cys-53–Cys-144, and Cys-119–Cys-136. Positions 32–145 (YDKYCYKVFD…CKSTLPFTCK (114 aa)) constitute a C-type lectin domain.

Belongs to the snaclec family. In terms of assembly, heterodimer of subunits A and B; disulfide-linked. In terms of tissue distribution, expressed by the venom gland.

It localises to the secreted. Its function is as follows. Interferes with one step of hemostasis (modulation of platelet aggregation, or coagulation cascade, for example). The polypeptide is Snaclec subunit B (Philodryas olfersii (Green snake)).